Consider the following 415-residue polypeptide: Esterase FrsA (415 aa).

This sequence belongs to the FrsA family.

The catalysed reaction is a carboxylic ester + H2O = an alcohol + a carboxylate + H(+). Catalyzes the hydrolysis of esters. The sequence is that of Esterase FrsA from Yersinia pseudotuberculosis serotype O:1b (strain IP 31758).